Consider the following 777-residue polypeptide: Ethylene receptor 4 (777 aa).

The next 3 membrane-spanning stretches (helical) occupy residues 49-69 (LLIA…ATCA), 77-97 (AVLH…LAAF), and 113-133 (AAKV…LTFI). Residues Cys-88 and His-92 each coordinate Cu cation. The GAF domain maps to 184–344 (DAHAILRTTA…VVADQAAVAL (161 aa)). Residues 387–521 (AMCHAMRRPV…NTGSGACRLS (135 aa)) form the Histidine kinase domain. His-390 carries the post-translational modification Phosphohistidine; by autocatalysis. Positions 645-774 (RVLLADDDAM…ALGAQLCRVL (130 aa)) constitute a Response regulatory domain. Residue Asp-696 is modified to 4-aspartylphosphate.

This sequence belongs to the ethylene receptor family. Cu cation is required as a cofactor.

It is found in the endoplasmic reticulum membrane. The enzyme catalyses ATP + protein L-histidine = ADP + protein N-phospho-L-histidine.. In terms of biological role, ethylene receptor related to bacterial two-component regulators. Acts as a redundant negative regulator of ethylene signaling. The protein is Ethylene receptor 4 (ETR4) of Oryza sativa subsp. japonica (Rice).